A 145-amino-acid chain; its full sequence is uncharacterized protein (145 aa).

Disordered stretches follow at residues 1 to 41 and 122 to 145; these read MRRL…PPGT and RLPS…PLAL. Positions 20-34 are enriched in polar residues; it reads GGPQNGTSGCTTAPQ. Over residues 134 to 145 the composition is skewed to basic and acidic residues; it reads DSQHPREVPLAL.

As to expression, ubiquitous.

This is an uncharacterized protein from Homo sapiens (Human).